We begin with the raw amino-acid sequence, 113 residues long: Hydrogenase maturation factor HypA (113 aa).

Residue histidine 2 coordinates Ni(2+). Positions 73, 76, 89, and 92 each coordinate Zn(2+).

Belongs to the HypA/HybF family.

In terms of biological role, involved in the maturation of [NiFe] hydrogenases. Required for nickel insertion into the metal center of the hydrogenase. In Aeromonas hydrophila subsp. hydrophila (strain ATCC 7966 / DSM 30187 / BCRC 13018 / CCUG 14551 / JCM 1027 / KCTC 2358 / NCIMB 9240 / NCTC 8049), this protein is Hydrogenase maturation factor HypA.